We begin with the raw amino-acid sequence, 333 residues long: tRNA uridine(34) hydroxylase (333 aa).

The Rhodanese domain maps to 123-217; it reads SDPEVVLVDT…YLEEVNKAES (95 aa). The active-site Cysteine persulfide intermediate is Cys177. Residues 313–327 are compositionally biased toward basic and acidic residues; it reads QKKEALRKQSAEKNK. The disordered stretch occupies residues 313 to 333; it reads QKKEALRKQSAEKNKAKQANA.

Belongs to the TrhO family.

The enzyme catalyses uridine(34) in tRNA + AH2 + O2 = 5-hydroxyuridine(34) in tRNA + A + H2O. In terms of biological role, catalyzes oxygen-dependent 5-hydroxyuridine (ho5U) modification at position 34 in tRNAs. The chain is tRNA uridine(34) hydroxylase from Shewanella oneidensis (strain ATCC 700550 / JCM 31522 / CIP 106686 / LMG 19005 / NCIMB 14063 / MR-1).